Here is a 233-residue protein sequence, read N- to C-terminus: Peroxisomal membrane protein 11-5 (233 aa).

Residues 1-92 (MSSLESARAD…PLILLGKSKN (92 aa)) are Cytoplasmic-facing. Residues 93–113 (ALLSTFLFLDQIVWAGRTGIY) traverse the membrane as a helical segment. At 114-206 (KNKERAEFLS…LLQLAPKKVT (93 aa)) the chain is on the lumenal side. A helical membrane pass occupies residues 207–226 (PRVTGAFGFASSLIACYQLL).

This sequence belongs to the peroxin-11 family. As to expression, expressed in seedlings, roots, shoots, leaf sheaths, flag leaf, panicles, spikelets, and endosperm.

Its subcellular location is the peroxisome membrane. Functionally, involved in peroxisomal proliferation. This chain is Peroxisomal membrane protein 11-5 (PEX11-5), found in Oryza sativa subsp. japonica (Rice).